The chain runs to 163 residues: Low molecular weight protein-tyrosine phosphatase A (163 aa).

Cys-11 functions as the Nucleophile in the catalytic mechanism. The active site involves Arg-17. The Proton donor role is filled by Asp-126.

This sequence belongs to the low molecular weight phosphotyrosine protein phosphatase family.

It catalyses the reaction O-phospho-L-tyrosyl-[protein] + H2O = L-tyrosyl-[protein] + phosphate. Its function is as follows. Key virulence factor required for mycobacterial survival within host macrophages. Exhibits protein tyrosine phosphatase activity. Supports mycobacteria survival during infection by modulation of the phagosome maturation and modulation of the normal host signaling pathways, including host innate immune responses and cell apoptosis. The chain is Low molecular weight protein-tyrosine phosphatase A (ptpA) from Mycobacterium bovis (strain ATCC BAA-935 / AF2122/97).